A 535-amino-acid chain; its full sequence is CTP synthase (535 aa).

The amidoligase domain stretch occupies residues 1 to 267 (MTKYIFVTGG…DQIVLDHFGV (267 aa)). Serine 13 is a CTP binding site. Residue serine 13 coordinates UTP. 14-19 (SLGKGI) provides a ligand contact to ATP. L-glutamine is bound at residue tyrosine 54. Aspartate 71 serves as a coordination point for ATP. Aspartate 71 and glutamate 141 together coordinate Mg(2+). CTP-binding positions include 148-150 (DIE), 188-193 (KTKPTQ), and lysine 224. UTP is bound by residues 188-193 (KTKPTQ) and lysine 224. Residues 292–535 (KIALVGKYVA…VAAASREVKD (244 aa)) form the Glutamine amidotransferase type-1 domain. Residue glycine 354 participates in L-glutamine binding. Cysteine 381 serves as the catalytic Nucleophile; for glutamine hydrolysis. L-glutamine-binding positions include 382 to 385 (LGMQ), glutamate 405, and arginine 463. Active-site residues include histidine 508 and glutamate 510.

It belongs to the CTP synthase family. As to quaternary structure, homotetramer.

It catalyses the reaction UTP + L-glutamine + ATP + H2O = CTP + L-glutamate + ADP + phosphate + 2 H(+). The catalysed reaction is L-glutamine + H2O = L-glutamate + NH4(+). It carries out the reaction UTP + NH4(+) + ATP = CTP + ADP + phosphate + 2 H(+). Its pathway is pyrimidine metabolism; CTP biosynthesis via de novo pathway; CTP from UDP: step 2/2. Allosterically activated by GTP, when glutamine is the substrate; GTP has no effect on the reaction when ammonia is the substrate. The allosteric effector GTP functions by stabilizing the protein conformation that binds the tetrahedral intermediate(s) formed during glutamine hydrolysis. Inhibited by the product CTP, via allosteric rather than competitive inhibition. Catalyzes the ATP-dependent amination of UTP to CTP with either L-glutamine or ammonia as the source of nitrogen. Regulates intracellular CTP levels through interactions with the four ribonucleotide triphosphates. In Levilactobacillus brevis (strain ATCC 367 / BCRC 12310 / CIP 105137 / JCM 1170 / LMG 11437 / NCIMB 947 / NCTC 947) (Lactobacillus brevis), this protein is CTP synthase.